A 165-amino-acid polypeptide reads, in one-letter code: UPF0114 protein in repA1-repA2 intergenic region (165 aa).

Transmembrane regions (helical) follow at residues 10-32 (YASR…LLTL), 53-75 (LILI…MVMF), and 136-155 (IMWC…GMAC).

The protein belongs to the UPF0114 family.

Its subcellular location is the cell membrane. This chain is UPF0114 protein in repA1-repA2 intergenic region, found in Buchnera aphidicola subsp. Geoica urticularia.